Here is a 273-residue protein sequence, read N- to C-terminus: MYSKVFSLISKYNLKPNSDLGQNFLIVGDVIKREVERAEIKNSETILEIGPGLGVLTDELAKRAGKVYAIEKDSRIIEILKKEYNWSNVEIMQGDALKIKFPEFNKVVSNLPYQISSPITFKLLKYDFERAVLIYQLEFAQRMVAKPGDKNYSRLSVMVQAKVNVDLVERIGRGAFYPKPKVDSAVIVMEPKPKDEQIELNENLVKALFQHRRKLASKALKDSYHMLGLTREDFKKFKPIIERVPHSNKRVFQLSIEDIKDIEEFLRNESLID.

S-adenosyl-L-methionine is bound by residues N23, L25, G50, E71, D95, and N110.

It belongs to the class I-like SAM-binding methyltransferase superfamily. rRNA adenine N(6)-methyltransferase family. RsmA subfamily.

Its subcellular location is the cytoplasm. Its function is as follows. Specifically dimethylates two adjacent adenosines in the loop of a conserved hairpin near the 3'-end of 16S rRNA in the 30S particle. May play a critical role in biogenesis of 30S subunits. The protein is Probable ribosomal RNA small subunit methyltransferase A of Thermococcus sibiricus (strain DSM 12597 / MM 739).